We begin with the raw amino-acid sequence, 567 residues long: Proline--tRNA ligase (567 aa).

This sequence belongs to the class-II aminoacyl-tRNA synthetase family. ProS type 1 subfamily. In terms of assembly, homodimer.

The protein localises to the cytoplasm. It carries out the reaction tRNA(Pro) + L-proline + ATP = L-prolyl-tRNA(Pro) + AMP + diphosphate. Catalyzes the attachment of proline to tRNA(Pro) in a two-step reaction: proline is first activated by ATP to form Pro-AMP and then transferred to the acceptor end of tRNA(Pro). As ProRS can inadvertently accommodate and process non-cognate amino acids such as alanine and cysteine, to avoid such errors it has two additional distinct editing activities against alanine. One activity is designated as 'pretransfer' editing and involves the tRNA(Pro)-independent hydrolysis of activated Ala-AMP. The other activity is designated 'posttransfer' editing and involves deacylation of mischarged Ala-tRNA(Pro). The misacylated Cys-tRNA(Pro) is not edited by ProRS. The chain is Proline--tRNA ligase from Fusobacterium nucleatum subsp. nucleatum (strain ATCC 25586 / DSM 15643 / BCRC 10681 / CIP 101130 / JCM 8532 / KCTC 2640 / LMG 13131 / VPI 4355).